The primary structure comprises 209 residues: Probable E3 ubiquitin-protein ligase NleG7 (209 aa).

This sequence belongs to the NleG E3 ligase family. Two sizes of protein are detected in situ; only the smaller protein is secreted.

The protein localises to the secreted. The protein resides in the host cytoplasm. It carries out the reaction S-ubiquitinyl-[E2 ubiquitin-conjugating enzyme]-L-cysteine + [acceptor protein]-L-lysine = [E2 ubiquitin-conjugating enzyme]-L-cysteine + N(6)-ubiquitinyl-[acceptor protein]-L-lysine.. Its function is as follows. Effector proteins function to alter host cell physiology and promote bacterial survival in host tissues. This protein is probably an E3 ubiquitin-protein ligase that interferes with the host's ubiquitination pathway and targets host proteins for proteasomal degradation. Mice infected with a strain of bacteria deleted for this gene were colonized less quickly by bacteria. This is Probable E3 ubiquitin-protein ligase NleG7 from Citrobacter rodentium.